We begin with the raw amino-acid sequence, 242 residues long: Ras-like protein family member 11A (242 aa).

The segment at 17–241 (ESSSDYLLPK…SSKAKASSAL (225 aa)) is small GTPase-like. GTP contacts are provided by residues 34-41 (GAGCVGKS), 81-88 (DTPGGIQA), and 147-150 (NKGD).

Belongs to the small GTPase superfamily. Ras family. As to quaternary structure, interacts with UBF/UBTF.

The protein localises to the nucleus. It is found in the nucleolus. The catalysed reaction is GTP + H2O = GDP + phosphate + H(+). In terms of biological role, regulator of rDNA transcription. Acts in cooperation UBF/UBTF and positively regulates RNA polymerase I transcription. This chain is Ras-like protein family member 11A, found in Mus musculus (Mouse).